A 903-amino-acid polypeptide reads, in one-letter code: DNA gyrase subunit A (903 aa).

The region spanning 36–499 is the Topo IIA-type catalytic domain; that stretch reads LPDARDGFKP…AIDDSDDEDL (464 aa). Tyr-124 acts as the O-(5'-phospho-DNA)-tyrosine intermediate in catalysis. Positions 526-532 match the GyrA-box motif; the sequence is QNRGGKG. The span at 881 to 895 shows a compositional bias: basic and acidic residues; sequence VDDDSVVKDDAEKQE. A disordered region spans residues 881–903; the sequence is VDDDSVVKDDAEKQEIGPTETEE.

Belongs to the type II topoisomerase GyrA/ParC subunit family. Heterotetramer, composed of two GyrA and two GyrB chains. In the heterotetramer, GyrA contains the active site tyrosine that forms a transient covalent intermediate with DNA, while GyrB binds cofactors and catalyzes ATP hydrolysis.

The protein localises to the cytoplasm. It catalyses the reaction ATP-dependent breakage, passage and rejoining of double-stranded DNA.. In terms of biological role, a type II topoisomerase that negatively supercoils closed circular double-stranded (ds) DNA in an ATP-dependent manner to modulate DNA topology and maintain chromosomes in an underwound state. Negative supercoiling favors strand separation, and DNA replication, transcription, recombination and repair, all of which involve strand separation. Also able to catalyze the interconversion of other topological isomers of dsDNA rings, including catenanes and knotted rings. Type II topoisomerases break and join 2 DNA strands simultaneously in an ATP-dependent manner. In Fibrobacter succinogenes (strain ATCC 19169 / S85), this protein is DNA gyrase subunit A.